The sequence spans 156 residues: 6,7-dimethyl-8-ribityllumazine synthase (156 aa).

5-amino-6-(D-ribitylamino)uracil is bound by residues Phe22, 57-59 (AYE), and 81-83 (SVI). 86-87 (GT) provides a ligand contact to (2S)-2-hydroxy-3-oxobutyl phosphate. The active-site Proton donor is His89. Residue Phe114 participates in 5-amino-6-(D-ribitylamino)uracil binding. Arg128 contributes to the (2S)-2-hydroxy-3-oxobutyl phosphate binding site.

The protein belongs to the DMRL synthase family. As to quaternary structure, forms an icosahedral capsid composed of 60 subunits, arranged as a dodecamer of pentamers.

It carries out the reaction (2S)-2-hydroxy-3-oxobutyl phosphate + 5-amino-6-(D-ribitylamino)uracil = 6,7-dimethyl-8-(1-D-ribityl)lumazine + phosphate + 2 H2O + H(+). Its pathway is cofactor biosynthesis; riboflavin biosynthesis; riboflavin from 2-hydroxy-3-oxobutyl phosphate and 5-amino-6-(D-ribitylamino)uracil: step 1/2. Its function is as follows. Catalyzes the formation of 6,7-dimethyl-8-ribityllumazine by condensation of 5-amino-6-(D-ribitylamino)uracil with 3,4-dihydroxy-2-butanone 4-phosphate. This is the penultimate step in the biosynthesis of riboflavin. In Photobacterium profundum (strain SS9), this protein is 6,7-dimethyl-8-ribityllumazine synthase.